Consider the following 293-residue polypeptide: Probable endonuclease 4 (293 aa).

Zn(2+) is bound by residues histidine 75, histidine 115, glutamate 153, aspartate 187, histidine 190, histidine 224, aspartate 237, histidine 239, and glutamate 269.

This sequence belongs to the AP endonuclease 2 family. Requires Zn(2+) as cofactor.

The catalysed reaction is Endonucleolytic cleavage to 5'-phosphooligonucleotide end-products.. Functionally, endonuclease IV plays a role in DNA repair. It cleaves phosphodiester bonds at apurinic or apyrimidinic (AP) sites, generating a 3'-hydroxyl group and a 5'-terminal sugar phosphate. The sequence is that of Probable endonuclease 4 from Chlamydia pneumoniae (Chlamydophila pneumoniae).